Consider the following 807-residue polypeptide: Glycerol-3-phosphate acyltransferase (807 aa).

The HXXXXD motif signature appears at 308 to 313 (CHRSHM).

It belongs to the GPAT/DAPAT family.

The protein localises to the cell inner membrane. The enzyme catalyses sn-glycerol 3-phosphate + an acyl-CoA = a 1-acyl-sn-glycero-3-phosphate + CoA. It functions in the pathway phospholipid metabolism; CDP-diacylglycerol biosynthesis; CDP-diacylglycerol from sn-glycerol 3-phosphate: step 1/3. This chain is Glycerol-3-phosphate acyltransferase, found in Shewanella sp. (strain MR-4).